The sequence spans 328 residues: Protein-glutamine deamidase Cif (328 aa).

The tract at residues 1–68 is disordered; the sequence is MLEHGVMKIP…TNRTGENPMI (68 aa). Residues 52–63 are compositionally biased toward polar residues; it reads RSSSISNTNRTG. Residues C156, H211, and Q231 contribute to the active site.

Belongs to the Cif family.

The protein resides in the secreted. The protein localises to the host nucleus. It catalyses the reaction L-glutaminyl-[protein] + H2O = L-glutamyl-[protein] + NH4(+). Protein-glutamine deamidase effector that inhibits the host cell cycle and other key cellular processes such as the actin network and programmed-cell death. Acts by mediating the side chain deamidation of 'Gln-40' of host NEDD8, converting it to glutamate, thereby abolishing the activity of cullin-RING-based E3 ubiquitin-protein ligase complexes (CRL complexes). Inactivation of CRL complexes prevents ubiquitination and subsequent degradation of the cyclin-dependent kinase inhibitors CDKN1A/p21 and CDKN1B/p27, leading to G1 and G2 cell cycle arrests in host cells. Deamidation of 'Gln-40' of host NEDD8 also triggers macrophage-specific programmed cell death. Also able to catalyze deamidation of 'Gln-40' of host ubiquitin in vitro; however, NEDD8 constitutes the preferred substrate in vivo. Also regulates the host NF-kappa-B signaling via activation of MAPK/ERK cascade: activation of host MAPK/ERK cascade is independent of CRL complexes inhibition, suggesting that Cif has other host protein targets than NEDD8. In Burkholderia pseudomallei (strain K96243), this protein is Protein-glutamine deamidase Cif.